A 304-amino-acid polypeptide reads, in one-letter code: Ribosomal RNA small subunit methyltransferase H (304 aa).

Residues 50–52 (GGH), aspartate 69, phenylalanine 97, aspartate 113, and glutamine 120 each bind S-adenosyl-L-methionine.

This sequence belongs to the methyltransferase superfamily. RsmH family.

It is found in the cytoplasm. It carries out the reaction cytidine(1402) in 16S rRNA + S-adenosyl-L-methionine = N(4)-methylcytidine(1402) in 16S rRNA + S-adenosyl-L-homocysteine + H(+). Functionally, specifically methylates the N4 position of cytidine in position 1402 (C1402) of 16S rRNA. This is Ribosomal RNA small subunit methyltransferase H from Rippkaea orientalis (strain PCC 8801 / RF-1) (Cyanothece sp. (strain PCC 8801)).